The chain runs to 494 residues: Alpha-amylase-related protein (494 aa).

Positions M1 to A20 are cleaved as a signal peptide. Position 21 is a pyrrolidone carboxylic acid (Q21). Residues C48 and C104 are joined by a disulfide bond. Residues N118, Q169, and D178 each coordinate Ca(2+). A disulfide bridge links C157 with C171. R206 contacts chloride. The active-site Nucleophile is D208. H212 is a Ca(2+) binding site. E245 functions as the Proton donor in the catalytic mechanism. N308 and R343 together coordinate chloride. 3 disulfide bridges follow: C376/C382, C418/C441, and C448/C460.

The protein belongs to the glycosyl hydrolase 13 family. In terms of assembly, monomer. It depends on Ca(2+) as a cofactor. Requires chloride as cofactor.

The protein resides in the secreted. It carries out the reaction Endohydrolysis of (1-&gt;4)-alpha-D-glucosidic linkages in polysaccharides containing three or more (1-&gt;4)-alpha-linked D-glucose units.. The protein is Alpha-amylase-related protein (Amyrel) of Drosophila atripex (Fruit fly).